The primary structure comprises 212 residues: Transmembrane protein 186 (212 aa).

At 1-78 the chain is on the mitochondrial matrix side; the sequence is MAAVLRAVAR…YLSRLKVAQT (78 aa). Residues 79–99 form a helical membrane-spanning segment; sequence ALTVAALPPGLYCYSQGLMPF. Over 100 to 101 the chain is Mitochondrial intermembrane; that stretch reads SS. The chain crosses the membrane as a helical span at residues 102–122; it reads LCLAGGVAGFALAMLCWMSHF. Over 123-212 the chain is Mitochondrial matrix; sequence FRRLVGILYV…QVFGVLDALK (90 aa).

The protein belongs to the TMEM186 family. In terms of assembly, part of the mitochondrial complex I assembly/MCIA complex that comprises at least the core subunits TMEM126B, NDUFAF1, ECSIT and ACAD9 and complement subunits such as COA1 and TMEM186. Interacts with MT-ND3.

The protein localises to the mitochondrion inner membrane. As part of the MCIA complex, required for efficient assembly of the mitochondrial complex I. The sequence is that of Transmembrane protein 186 from Bos taurus (Bovine).